The sequence spans 317 residues: Urease accessory protein 6 (317 aa).

Belongs to the UreF family. In terms of assembly, URE4, URE6 and URE7 may form a complex that acts as a GTP-hydrolysis-dependent molecular chaperone, activating the urease apoprotein URE1.

In terms of biological role, urease accessory protein required for the maturation and activation of urease via the functional incorporation of the urease nickel metallocenter. Plays a role in host brain invasion. This chain is Urease accessory protein 6, found in Cryptococcus neoformans var. grubii serotype A (strain H99 / ATCC 208821 / CBS 10515 / FGSC 9487) (Filobasidiella neoformans var. grubii).